Here is an 82-residue protein sequence, read N- to C-terminus: Small ribosomal subunit protein bS18 (82 aa).

The segment at 1 to 25 is disordered; it reads MADTSSSQARRPFHRRRKTCPFSGA.

This sequence belongs to the bacterial ribosomal protein bS18 family. Part of the 30S ribosomal subunit. Forms a tight heterodimer with protein bS6.

Binds as a heterodimer with protein bS6 to the central domain of the 16S rRNA, where it helps stabilize the platform of the 30S subunit. The sequence is that of Small ribosomal subunit protein bS18 from Agrobacterium fabrum (strain C58 / ATCC 33970) (Agrobacterium tumefaciens (strain C58)).